Here is a 722-residue protein sequence, read N- to C-terminus: MAVRERAAAAMAALERRVPSLDDFAGQSWSSWVERADLPAADGAELEESSKNTKKLDAMTLIKEDMSIFGHCPAHDDFYLVVCNHCSQVVKPQAFQKHCERRHGPLSKLYGRAPPPPPAPASSQKCHVVNGQGPACRAPGSTKTSSREKGQGSRSRGHQPPEKTQKDNLCQPGGLTKDSPGKPPMAPPSKEPPGRENIEIIPSEGSSHWAEGSPPEKEPSGTRLPPKTHRKMARKECDLNRQCGVINPETKKICTRLLTCKIHSVHQRREVQGRAKDFDVLVAELKANSRKGESPKEKSPGRKEQVLERPSQELPSSVQVVAAVAAPSSTFSVRAKQTYPYCALPRSRASSESELDDEGPCGGDGDPGLFPFPMPRGGTQASSEESEEEGTSDDLHPPPDCHYATRPPRPQAFCTFGSRLVSPGCYVFSRRLDRFCSALSSMLERHLSTHMWKKIPPAAEPPAHLVNSPLSAPLSPSSTGTCPRLPGPTLRPACPASMPPTKDNLVPSYPAGSPSVAAACSQAECMGGSQAITSPLPANTPSPSFSKLPPSKASKSSKGKDGVEVEAPSRKRKLSPGPTTLKRTCILEPTGKGKPSGCRGLSAKTKTALSMGLNGTMGPRVKRAGPLDCRGSPHQLPTPVKASQLENRGAAGHPAKALPTNCLSEEEVAKKRKNLATYCRPVKAKHCQAGAPADVACSVRRKKPGPALAFEEKCSTLKSKAH.

4 disordered regions span residues 106 to 228, 288 to 317, 347 to 403, and 531 to 600; these read LSKL…PPKT, NSRKGESPKEKSPGRKEQVLERPSQELPSS, SRAS…DCHY, and AITS…GCRG. Residues 181–191 are compositionally biased toward pro residues; the sequence is GKPPMAPPSKE. In terms of domain architecture, SCA7 spans 230–297; the sequence is RKMARKECDL…NSRKGESPKE (68 aa). Basic and acidic residues predominate over residues 290–311; it reads RKGESPKEKSPGRKEQVLERPS. Positions 541–556 are enriched in low complexity; sequence PSPSFSKLPPSKASKS. A compositionally biased stretch (basic and acidic residues) spans 558-569; sequence KGKDGVEVEAPS. Phosphoserine is present on serine 575.

The sequence is that of Ataxin-7-like protein 2 (ATXN7L2) from Homo sapiens (Human).